The chain runs to 313 residues: Porphobilinogen deaminase (313 aa).

At cysteine 242 the chain carries S-(dipyrrolylmethanemethyl)cysteine.

It belongs to the HMBS family. In terms of assembly, monomer. Requires dipyrromethane as cofactor.

The enzyme catalyses 4 porphobilinogen + H2O = hydroxymethylbilane + 4 NH4(+). Its pathway is porphyrin-containing compound metabolism; protoporphyrin-IX biosynthesis; coproporphyrinogen-III from 5-aminolevulinate: step 2/4. Tetrapolymerization of the monopyrrole PBG into the hydroxymethylbilane pre-uroporphyrinogen in several discrete steps. This is Porphobilinogen deaminase from Escherichia coli O45:K1 (strain S88 / ExPEC).